The chain runs to 373 residues: Probable pectin lyase D (373 aa).

Residues 1 to 24 (MKYAAALTAVAALAARAAAVGVSG) form the signal peptide. 2 cysteine pairs are disulfide-bonded: Cys82-Cys101 and Cys91-Cys225. Asn128 carries N-linked (GlcNAc...) asparagine glycosylation. Residue Arg255 is part of the active site. N-linked (GlcNAc...) asparagine glycosylation occurs at Asn274. The cysteines at positions 321 and 329 are disulfide-linked. Asn348 is a glycosylation site (N-linked (GlcNAc...) asparagine). Residues 354–366 (LPSADAASTSPAS) show a composition bias toward low complexity. The tract at residues 354-373 (LPSADAASTSPASNAGQGNL) is disordered.

It belongs to the polysaccharide lyase 1 family.

Its subcellular location is the secreted. It carries out the reaction Eliminative cleavage of (1-&gt;4)-alpha-D-galacturonan methyl ester to give oligosaccharides with 4-deoxy-6-O-methyl-alpha-D-galact-4-enuronosyl groups at their non-reducing ends.. Its function is as follows. Pectinolytic enzymes consist of four classes of enzymes: pectin lyase, polygalacturonase, pectin methylesterase and rhamnogalacturonase. Among pectinolytic enzymes, pectin lyase is the most important in depolymerization of pectin, since it cleaves internal glycosidic bonds of highly methylated pectins. The protein is Probable pectin lyase D (pelD) of Aspergillus niger (strain ATCC MYA-4892 / CBS 513.88 / FGSC A1513).